Here is an 802-residue protein sequence, read N- to C-terminus: Phenylalanine--tRNA ligase beta subunit (802 aa).

In terms of domain architecture, tRNA-binding spans 40 to 155 (SASLKNVVVG…EHVETGVSAI (116 aa)). Positions 409–484 (KAVNKIETSL…RIYGYDEIPV (76 aa)) constitute a B5 domain. 4 residues coordinate Mg(2+): Asp462, Asp468, Glu471, and Glu472. In terms of domain architecture, FDX-ACB spans 709-802 (PRYPEMTRDL…LQAKLHAIIR (94 aa)).

This sequence belongs to the phenylalanyl-tRNA synthetase beta subunit family. Type 1 subfamily. Tetramer of two alpha and two beta subunits. It depends on Mg(2+) as a cofactor.

The protein localises to the cytoplasm. It carries out the reaction tRNA(Phe) + L-phenylalanine + ATP = L-phenylalanyl-tRNA(Phe) + AMP + diphosphate + H(+). The chain is Phenylalanine--tRNA ligase beta subunit from Listeria innocua serovar 6a (strain ATCC BAA-680 / CLIP 11262).